Here is a 396-residue protein sequence, read N- to C-terminus: Flap endonuclease 1 (396 aa).

The tract at residues 1 to 104 (MGIKHLYQLI…GELAKRFQRK (104 aa)) is N-domain. A Mg(2+)-binding site is contributed by Asp34. DNA is bound by residues Arg47 and Arg70. Residues Asp86, Glu158, Glu160, Asp179, and Asp181 each coordinate Mg(2+). Residues 122-255 (DVEKFSRRTV…STALKLIRDH (134 aa)) form an I-domain region. Glu158 provides a ligand contact to DNA. Positions 233 and 235 each coordinate DNA. Mg(2+) is bound at residue Asp235. Positions 338 to 396 (MKSAQQSRLEGFFKPVERTPEEKASLKRKADEKLSEKKKKQKEEAKAKKQAKSKPRTAG) are disordered. The tract at residues 342 to 350 (QQSRLEGFF) is interaction with PCNA. Residues 352 to 384 (PVERTPEEKASLKRKADEKLSEKKKKQKEEAKA) show a composition bias toward basic and acidic residues. Residues 385–396 (KKQAKSKPRTAG) are compositionally biased toward basic residues.

It belongs to the XPG/RAD2 endonuclease family. FEN1 subfamily. As to quaternary structure, interacts with PCNA. Three molecules of FEN1 bind to one PCNA trimer with each molecule binding to one PCNA monomer. PCNA stimulates the nuclease activity without altering cleavage specificity. The cofactor is Mg(2+). In terms of processing, phosphorylated. Phosphorylation upon DNA damage induces relocalization to the nuclear plasma.

The protein localises to the nucleus. Its subcellular location is the nucleolus. The protein resides in the nucleoplasm. It localises to the mitochondrion. In terms of biological role, structure-specific nuclease with 5'-flap endonuclease and 5'-3' exonuclease activities involved in DNA replication and repair. During DNA replication, cleaves the 5'-overhanging flap structure that is generated by displacement synthesis when DNA polymerase encounters the 5'-end of a downstream Okazaki fragment. It enters the flap from the 5'-end and then tracks to cleave the flap base, leaving a nick for ligation. Also involved in the long patch base excision repair (LP-BER) pathway, by cleaving within the apurinic/apyrimidinic (AP) site-terminated flap. Acts as a genome stabilization factor that prevents flaps from equilibrating into structures that lead to duplications and deletions. Also possesses 5'-3' exonuclease activity on nicked or gapped double-stranded DNA, and exhibits RNase H activity. Also involved in replication and repair of rDNA and in repairing mitochondrial DNA. The sequence is that of Flap endonuclease 1 from Phaeosphaeria nodorum (strain SN15 / ATCC MYA-4574 / FGSC 10173) (Glume blotch fungus).